The following is a 571-amino-acid chain: Urease subunit alpha (571 aa).

Residues 133–571 (GGIDTHVHFI…LPLTQRYFLF (439 aa)) enclose the Urease domain. Ni(2+) contacts are provided by histidine 138, histidine 140, and lysine 221. Lysine 221 is modified (N6-carboxylysine). Histidine 223 provides a ligand contact to substrate. Histidine 250 and histidine 276 together coordinate Ni(2+). The active-site Proton donor is the histidine 324. Aspartate 364 contacts Ni(2+).

The protein belongs to the metallo-dependent hydrolases superfamily. Urease alpha subunit family. In terms of assembly, heterotrimer of UreA (gamma), UreB (beta) and UreC (alpha) subunits. Three heterotrimers associate to form the active enzyme. Ni cation serves as cofactor. Post-translationally, carboxylation allows a single lysine to coordinate two nickel ions.

It localises to the cytoplasm. It catalyses the reaction urea + 2 H2O + H(+) = hydrogencarbonate + 2 NH4(+). It functions in the pathway nitrogen metabolism; urea degradation; CO(2) and NH(3) from urea (urease route): step 1/1. The protein is Urease subunit alpha of Staphylococcus saprophyticus subsp. saprophyticus (strain ATCC 15305 / DSM 20229 / NCIMB 8711 / NCTC 7292 / S-41).